The chain runs to 179 residues: MARLLEHYRGEVKPKLKDEMGYKNIMEVPKLEKVVVNMGIGDAKDNPKILDNAVENLEQVTGQKPVVTKAKRSIANFKVRQGMPVGCKVTLRGERMYHFLDKLINVALPRVRDFKGVSPKAFDGRGNYSLGLKEQMVFPELEYDDIERVQGMDIIIATTAETDEEAKKLLERLGMPFSG.

The protein belongs to the universal ribosomal protein uL5 family. Part of the 50S ribosomal subunit; part of the 5S rRNA/L5/L18/L25 subcomplex. Contacts the 5S rRNA and the P site tRNA. Forms a bridge to the 30S subunit in the 70S ribosome.

This is one of the proteins that bind and probably mediate the attachment of the 5S RNA into the large ribosomal subunit, where it forms part of the central protuberance. In the 70S ribosome it contacts protein S13 of the 30S subunit (bridge B1b), connecting the 2 subunits; this bridge is implicated in subunit movement. Contacts the P site tRNA; the 5S rRNA and some of its associated proteins might help stabilize positioning of ribosome-bound tRNAs. The protein is Large ribosomal subunit protein uL5 of Natranaerobius thermophilus (strain ATCC BAA-1301 / DSM 18059 / JW/NM-WN-LF).